We begin with the raw amino-acid sequence, 311 residues long: DNA repair and recombination protein RadA (311 aa).

Residue 104 to 111 coordinates ATP; sequence GEFGSGKS.

It belongs to the eukaryotic RecA-like protein family.

Functionally, involved in DNA repair and in homologous recombination. Binds and assemble on single-stranded DNA to form a nucleoprotein filament. Hydrolyzes ATP in a ssDNA-dependent manner and promotes DNA strand exchange between homologous DNA molecules. The sequence is that of DNA repair and recombination protein RadA from Methanobrevibacter smithii (strain ATCC 35061 / DSM 861 / OCM 144 / PS).